The sequence spans 637 residues: Chaperone protein HtpG (637 aa).

Residues 1-335 are a; substrate-binding; the sequence is MQGTVNSERL…SSDLPLNISR (335 aa). The segment at 336-559 is b; the sequence is ETLQNNKIIE…DGSMDIRMER (224 aa). Positions 560–637 are c; that stretch reads FLREQKQLNY…RMNSVLSQIN (78 aa).

This sequence belongs to the heat shock protein 90 family. In terms of assembly, homodimer.

The protein localises to the cytoplasm. Its function is as follows. Molecular chaperone. Has ATPase activity. In Ehrlichia ruminantium (strain Gardel), this protein is Chaperone protein HtpG.